Reading from the N-terminus, the 447-residue chain is N-succinylarginine dihydrolase (447 aa).

Residues 19 to 28 (AGLSFGNEAS), N110, and 137 to 138 (HR) each bind substrate. E174 is a catalytic residue. A substrate-binding site is contributed by R213. H249 is an active-site residue. Positions 251 and 364 each coordinate substrate. C370 functions as the Nucleophile in the catalytic mechanism.

It belongs to the succinylarginine dihydrolase family. As to quaternary structure, homodimer.

The catalysed reaction is N(2)-succinyl-L-arginine + 2 H2O + 2 H(+) = N(2)-succinyl-L-ornithine + 2 NH4(+) + CO2. It functions in the pathway amino-acid degradation; L-arginine degradation via AST pathway; L-glutamate and succinate from L-arginine: step 2/5. In terms of biological role, catalyzes the hydrolysis of N(2)-succinylarginine into N(2)-succinylornithine, ammonia and CO(2). The protein is N-succinylarginine dihydrolase of Yersinia pseudotuberculosis serotype O:1b (strain IP 31758).